The sequence spans 356 residues: S-adenosylmethionine:tRNA ribosyltransferase-isomerase (356 aa).

Belongs to the QueA family. As to quaternary structure, monomer.

It localises to the cytoplasm. The catalysed reaction is 7-aminomethyl-7-carbaguanosine(34) in tRNA + S-adenosyl-L-methionine = epoxyqueuosine(34) in tRNA + adenine + L-methionine + 2 H(+). It participates in tRNA modification; tRNA-queuosine biosynthesis. Transfers and isomerizes the ribose moiety from AdoMet to the 7-aminomethyl group of 7-deazaguanine (preQ1-tRNA) to give epoxyqueuosine (oQ-tRNA). This is S-adenosylmethionine:tRNA ribosyltransferase-isomerase from Cronobacter sakazakii (strain ATCC BAA-894) (Enterobacter sakazakii).